The primary structure comprises 586 residues: Asparagine synthetase [glutamine-hydrolyzing] 1 (586 aa).

Cysteine 2 acts as the For GATase activity in catalysis. In terms of domain architecture, Glutamine amidotransferase type-2 spans 2–185; sequence CGILAVLGCS…PGHLYSSRER (184 aa). Residues 50–54, 75–77, and aspartate 98 contribute to the L-glutamine site; these read RLAIV and NGE. The region spanning 193–516 is the Asparagine synthetase domain; it reads PTWFSESIPS…PQNSARLTVP (324 aa). ATP-binding positions include leucine 231, valine 267, and 341-342; that span reads SG.

It catalyses the reaction L-aspartate + L-glutamine + ATP + H2O = L-asparagine + L-glutamate + AMP + diphosphate + H(+). It functions in the pathway amino-acid biosynthesis; L-asparagine biosynthesis; L-asparagine from L-aspartate (L-Gln route): step 1/1. This chain is Asparagine synthetase [glutamine-hydrolyzing] 1 (AS1), found in Lotus japonicus (Lotus corniculatus var. japonicus).